A 405-amino-acid chain; its full sequence is Prostaglandin E2 receptor EP1 subtype (405 aa).

Residues 1–39 (MSPYGLNLSLVDEATTCVTPRVPNTSVVLPTGGNGTSPA) lie on the Extracellular side of the membrane. N-linked (GlcNAc...) asparagine glycosylation is found at asparagine 7, asparagine 24, and asparagine 34. The helical transmembrane segment at 40-62 (LPIFSMTLGAVSNVLALALLAQV) threads the bilayer. Residues 63 to 80 (AGRLRRRRSTATFLLFVA) lie on the Cytoplasmic side of the membrane. A helical membrane pass occupies residues 81 to 99 (SLLAIDLAGHVIPGALVLR). Topologically, residues 100–113 (LYTAGRAPAGGACH) are extracellular. Cysteine 112 and cysteine 190 are oxidised to a cystine. The chain crosses the membrane as a helical span at residues 114–135 (FLGGCMVFFGLCPLLLGCGMAV). Over 136-157 (ERCVGVTQPLIHAARVSVARAR) the chain is Cytoplasmic. A helical transmembrane segment spans residues 158–179 (LALALLAAMALAVALLPLVHVG). Topologically, residues 180–202 (HYELQYPGTWCFISLGPPGGWRQ) are extracellular. A helical membrane pass occupies residues 203–228 (ALLAGLFAGLGLAALLAALVCNTLSG). The Cytoplasmic portion of the chain corresponds to 229–301 (LALLRARWRR…HAHDVEMVGQ (73 aa)). A helical transmembrane segment spans residues 302-323 (LVGIMVVSCICWSPLLVLVVLA). Topologically, residues 324–337 (IGGWNSNSLQRPLF) are extracellular. The chain crosses the membrane as a helical span at residues 338–357 (LAVRLASWNQILDPWVYILL). Over 358 to 405 (RQAMLRQLLRLLPLRVSAKGGPTELSLTKSAWEASSLRSSRHSGFSHL) the chain is Cytoplasmic.

Belongs to the G-protein coupled receptor 1 family. Post-translationally, phosphorylated. In terms of tissue distribution, highly abundant in kidney and lung. Found in a lesser extent in spleen, colon, and thymus. Also expressed in uterine myometrium and endometrium.

It localises to the cell membrane. Its function is as follows. Receptor for prostaglandin E2 (PGE2). The activity of this receptor is mediated by G(q) proteins which activate a phosphatidylinositol-calcium second messenger system. May play a role as an important modulator of renal function. Implicated the smooth muscle contractile response to PGE2 in various tissues. Isoform 1 and isoform 2 have identical ligand binding properties, but isoform 2 lacks coupling to calcium mobilization and may therefore attenuate the action of PGE2 on tissues. The protein is Prostaglandin E2 receptor EP1 subtype (Ptger1) of Rattus norvegicus (Rat).